Reading from the N-terminus, the 497-residue chain is Mechanosensitive ion channel protein 1, mitochondrial (497 aa).

The transit peptide at 1–86 (MAGVRLSLLK…RAFSSKSDDF (86 aa)) directs the protein to the mitochondrion. A run of 5 helical transmembrane segments spans residues 152–172 (DVIV…VVMP), 216–236 (LVTF…TIAA), 238–258 (YFSP…LYRW), 280–300 (VLTL…MASA), and 305–325 (VAVQ…AFAA).

This sequence belongs to the MscS (TC 1.A.23) family.

The protein localises to the mitochondrion membrane. Functionally, mechanosensitive channel that opens in response to stretch forces in the membrane lipid bilayer. The chain is Mechanosensitive ion channel protein 1, mitochondrial (MSL1) from Arabidopsis thaliana (Mouse-ear cress).